A 147-amino-acid polypeptide reads, in one-letter code: uncharacterized protein (147 aa).

The tract at residues 23 to 48 (EEVSQPEPNTANDSSTEYKGKSKDDF) is disordered. Positions 28-37 (PEPNTANDSS) are enriched in polar residues. A compositionally biased stretch (basic and acidic residues) spans 38–48 (TEYKGKSKDDF). The chain crosses the membrane as a helical span at residues 85-105 (LMFCIIACSFICAIQFLFFII).

The protein localises to the membrane. This is an uncharacterized protein from Saccharomyces cerevisiae (strain ATCC 204508 / S288c) (Baker's yeast).